A 279-amino-acid polypeptide reads, in one-letter code: Biotin synthase (279 aa).

Residues 1–228 form the Radical SAM core domain; sequence MKDIFLCSIC…SARLMIAGGR (228 aa). Residues Cys-17, Cys-21, and Cys-24 each coordinate [4Fe-4S] cluster. Residues Cys-61, Cys-96, Cys-154, and Arg-221 each coordinate [2Fe-2S] cluster.

The protein belongs to the radical SAM superfamily. Biotin synthase family. Homodimer. The cofactor is [4Fe-4S] cluster. Requires [2Fe-2S] cluster as cofactor.

The enzyme catalyses (4R,5S)-dethiobiotin + (sulfur carrier)-SH + 2 reduced [2Fe-2S]-[ferredoxin] + 2 S-adenosyl-L-methionine = (sulfur carrier)-H + biotin + 2 5'-deoxyadenosine + 2 L-methionine + 2 oxidized [2Fe-2S]-[ferredoxin]. Its pathway is cofactor biosynthesis; biotin biosynthesis; biotin from 7,8-diaminononanoate: step 2/2. In terms of biological role, catalyzes the conversion of dethiobiotin (DTB) to biotin by the insertion of a sulfur atom into dethiobiotin via a radical-based mechanism. In Wolinella succinogenes (strain ATCC 29543 / DSM 1740 / CCUG 13145 / JCM 31913 / LMG 7466 / NCTC 11488 / FDC 602W) (Vibrio succinogenes), this protein is Biotin synthase.